Here is a 120-residue protein sequence, read N- to C-terminus: Large ribosomal subunit protein eL34 (120 aa).

The protein belongs to the eukaryotic ribosomal protein eL34 family.

The chain is Large ribosomal subunit protein eL34 (RPL34) from Pisum sativum (Garden pea).